The following is a 635-amino-acid chain: Biosynthetic arginine decarboxylase (635 aa).

Lysine 100 carries the post-translational modification N6-(pyridoxal phosphate)lysine. 282–292 contacts substrate; it reads VDIGGGLGVDY.

It belongs to the Orn/Lys/Arg decarboxylase class-II family. SpeA subfamily. Mg(2+) serves as cofactor. The cofactor is pyridoxal 5'-phosphate.

It catalyses the reaction L-arginine + H(+) = agmatine + CO2. It participates in amine and polyamine biosynthesis; agmatine biosynthesis; agmatine from L-arginine: step 1/1. In terms of biological role, catalyzes the biosynthesis of agmatine from arginine. The protein is Biosynthetic arginine decarboxylase of Geotalea daltonii (strain DSM 22248 / JCM 15807 / FRC-32) (Geobacter daltonii).